The sequence spans 117 residues: Small ribosomal subunit protein uS17 (117 aa).

Belongs to the universal ribosomal protein uS17 family. In terms of assembly, part of the 30S ribosomal subunit.

One of the primary rRNA binding proteins, it binds specifically to the 5'-end of 16S ribosomal RNA. The chain is Small ribosomal subunit protein uS17 from Methanocaldococcus jannaschii (strain ATCC 43067 / DSM 2661 / JAL-1 / JCM 10045 / NBRC 100440) (Methanococcus jannaschii).